Consider the following 228-residue polypeptide: L-ribulose-5-phosphate 4-epimerase UlaF (228 aa).

Residues 26 to 27 (GN), 43 to 44 (SG), and 72 to 73 (SS) each bind substrate. Aspartate 74, histidine 93, and histidine 95 together coordinate Zn(2+). Catalysis depends on aspartate 118, which acts as the Proton donor/acceptor. A Zn(2+)-binding site is contributed by histidine 167. The active-site Proton donor/acceptor is tyrosine 225.

It belongs to the aldolase class II family. AraD/FucA subfamily. Zn(2+) serves as cofactor.

The catalysed reaction is L-ribulose 5-phosphate = D-xylulose 5-phosphate. Its pathway is cofactor degradation; L-ascorbate degradation; D-xylulose 5-phosphate from L-ascorbate: step 4/4. Catalyzes the isomerization of L-ribulose 5-phosphate to D-xylulose 5-phosphate. Is involved in the anaerobic L-ascorbate utilization. This Escherichia coli O6:K15:H31 (strain 536 / UPEC) protein is L-ribulose-5-phosphate 4-epimerase UlaF.